A 270-amino-acid chain; its full sequence is BPI fold-containing family A member 5 (270 aa).

A signal peptide spans 1–19 (MFLAGSFIVLCGLLAQSTA). A disulfide bond links Cys196 and Cys238.

It belongs to the BPI/LBP/Plunc superfamily. Plunc family. Expressed in interpapillar epithelium of the anterior part of the tongue.

The protein localises to the secreted. Its function is as follows. May play a role in innate immunity in the oral cavity. This Mus musculus (Mouse) protein is BPI fold-containing family A member 5 (Bpifa5).